We begin with the raw amino-acid sequence, 37 residues long: uncharacterized protein (37 aa).

This sequence belongs to the poxviridae A56.5 protein family.

This is an uncharacterized protein from Vaccinia virus (strain Western Reserve) (VACV).